Consider the following 348-residue polypeptide: MRSLPFALTVESVSARAPTCCSTGRFTQGRQPCKCKACGRGFTQSASLLQHWRVHSDWRETLSLSPVRQDLLWPLQPHQAPASPLGRSHSSAGVRQGFSGQLCCWLTKEHTLAEALRLSPVPAGFWGPVEADRPPANSHRRVCPFCCCSCGDSVNEKTSLSQRVLPHPGEKTCRGGSVESVSLAPSSVAPDSTSGLRPCGSPGSFLQHLPPSTLLPRPPFLYPGPPLSLQPLVPSGLPAVPAVPLGGLEVAQVPPATQPAAQQEGAMGPRSCASAGRDSREAVQAPGYPEPARKASQHRAAGPLGEARARLQRQCRAPPPPSNPHWRGALPVFPVWKASSRRSNLARH.

The C2H2-type 1 zinc finger occupies 33–55; the sequence is CKCKACGRGFTQSASLLQHWRVH. Residues 145-167 form a C2H2-type 2; degenerate zinc finger; the sequence is FCCCSCGDSVNEKTSLSQRVLPH. Over residues 184 to 195 the composition is skewed to polar residues; it reads APSSVAPDSTSG. Disordered regions lie at residues 184–203 and 256–329; these read APSS…GSPG and ATQP…WRGA.

The polypeptide is Zinc finger protein 843 (ZNF843) (Homo sapiens (Human)).